The primary structure comprises 743 residues: Mitochondrial exoribonuclease DSS-1 (743 aa).

The N-terminal 67 residues, 1-67 (MTPRRVAKLV…KELLHLQRSL (67 aa)), are a transit peptide targeting the mitochondrion. Positions 186–542 (THNPAYAIDS…VHHQLKVWLW (357 aa)) constitute an RNB domain. The interval 320–357 (VGNQHHHTERESTQASPAKREEGKKGMVASGGTSSCRP) is disordered. A compositionally biased stretch (basic and acidic residues) spans 325–344 (HHTERESTQASPAKREEGKK).

Belongs to the RNR ribonuclease family. In terms of assembly, component of the mitochondrial 3' processome (MPsome) complex composed at least of terminal uridylyltransferase KRET1/TUT1, 3'-5' exonuclease DSS1, MPSS1, MPSS2 and MPSS3. Within the complex, interacts with KRET1 and MPSS2. Component of the mitochondrial degradosome complex composed at least of 3'-5' exonuclease DSS1 and helicase SUV3. Within the complex, interacts with helicase SUV3.

The protein localises to the mitochondrion. It carries out the reaction Exonucleolytic cleavage in the 3'- to 5'-direction to yield nucleoside 5'-phosphates.. 3'-5'exoribonuclease which is involved in the post-transcriptional processing, editing and degradation of mitochondrial RNAs, including mRNAs, rRNAs and guided RNAs (gRNA). As part of the mitochondrial 3' processome (MPsome), involved in the maturation of guided RNA (gRNA) precursors by catalyzing the processive 3'-5' degradation of uridylated gRNA precursors. Plays a role in the degradation of 12S rRNA processing intermediates and maturation by-products. The chain is Mitochondrial exoribonuclease DSS-1 from Trypanosoma brucei brucei.